The sequence spans 159 residues: Ribosomal RNA large subunit methyltransferase H (159 aa).

S-adenosyl-L-methionine-binding positions include L76, G108, and 127-132 (MSKMTF).

The protein belongs to the RNA methyltransferase RlmH family. In terms of assembly, homodimer.

It localises to the cytoplasm. The enzyme catalyses pseudouridine(1915) in 23S rRNA + S-adenosyl-L-methionine = N(3)-methylpseudouridine(1915) in 23S rRNA + S-adenosyl-L-homocysteine + H(+). Specifically methylates the pseudouridine at position 1915 (m3Psi1915) in 23S rRNA. In Ureaplasma parvum serovar 3 (strain ATCC 27815 / 27 / NCTC 11736), this protein is Ribosomal RNA large subunit methyltransferase H.